The chain runs to 376 residues: N-acetyldiaminopimelate deacetylase (376 aa).

Residue Asp69 is part of the active site. Catalysis depends on Glu128, which acts as the Proton acceptor.

It belongs to the peptidase M20A family. N-acetyldiaminopimelate deacetylase subfamily.

It catalyses the reaction N-acetyl-(2S,6S)-2,6-diaminopimelate + H2O = (2S,6S)-2,6-diaminopimelate + acetate. Its pathway is amino-acid biosynthesis; L-lysine biosynthesis via DAP pathway; LL-2,6-diaminopimelate from (S)-tetrahydrodipicolinate (acetylase route): step 3/3. Functionally, catalyzes the conversion of N-acetyl-diaminopimelate to diaminopimelate and acetate. This Streptococcus pneumoniae (strain CGSP14) protein is N-acetyldiaminopimelate deacetylase.